Reading from the N-terminus, the 624-residue chain is MAFPNIEQYPQISVDCESTGLEWYKEDRAFGVSIYLPTGDAEYYDIRKDRNAFHWMKDNLWKAKKIVNHNIKFDIHMLRATGINLNPANCECTMIRAALIDEHLLKYDLDSLLKKYLKMSKDNDIYADLAQIFGGQPTRKVQILNLHRAPVDLVARYANIDTEGAYKLWEWQEGEIERQDLHQVWQLERRLFRHIVEMERRGIRIDPNEANRRAEELDRVTAETVAELNRLAGFEVNPNPSGSIKKLFNPKQNEAGIWVARDGTPLPKTDSGAPSLGAKSLESMTDPCAKLILKARKLNKTKDTFIRGHVLGHAIQNGQDWFVHPNINQTKSDTGDGSEGTGTGRLSYTRPALQQIPSRDKEIASIVRPIFLPDRGQKWSYGDLDQHEFRIFAHYANPKDIIEAYAQNPDLDMHQIVADLTGMPRSATKAGEANAKQINLGMVFNMGAGELASQMGLPFTIESVDFGDHVHDLKKAGPETLEIVENYYAKVQGVKEMARKARTIAKSRGYVRTLMGRHIRFPRGMFTYKASGLIFQGTAGDLNKLNICNIAEYLESECPYNRLLLNIHDEYSVSLEDDGKEIKHLKELQGLVQHRPELRVPIRIDFSHPAPNWWLATRADLATK.

It belongs to the DNA polymerase type-A family. DpoZ subfamily.

It carries out the reaction DNA(n) + a 2'-deoxyribonucleoside 5'-triphosphate = DNA(n+1) + diphosphate. It catalyses the reaction dZTP + DNA(n) = DNA(n)-Z + diphosphate. DNA polymerase that preferentially incorporates the non-canonical base aminoadenine/dZTP instead of adenine into the synthesized DNA. 29 times as efficient in using dZTP instead of dATP as a substrate. In addition to this preference for dZTP, the phage also encodes a dATP triphosphohydrolase that removes dATP and its precursor dADP from the nucleotide pool of the host. This chain is DNA polymerase DpoZ (dpoZ), found in Acinetobacter baumannii.